A 350-amino-acid chain; its full sequence is Small ribosomal subunit biogenesis GTPase RsgA (350 aa).

Polar residues predominate over residues M1 to N17. Positions M1 to D33 are disordered. The 170-residue stretch at T104 to F273 folds into the CP-type G domain. GTP contacts are provided by residues N160–D163 and G214–S222. C297, C302, H304, and C310 together coordinate Zn(2+).

Belongs to the TRAFAC class YlqF/YawG GTPase family. RsgA subfamily. Monomer. Associates with 30S ribosomal subunit, binds 16S rRNA. The cofactor is Zn(2+).

The protein localises to the cytoplasm. Functionally, one of several proteins that assist in the late maturation steps of the functional core of the 30S ribosomal subunit. Helps release RbfA from mature subunits. May play a role in the assembly of ribosomal proteins into the subunit. Circularly permuted GTPase that catalyzes slow GTP hydrolysis, GTPase activity is stimulated by the 30S ribosomal subunit. This Escherichia coli (strain SMS-3-5 / SECEC) protein is Small ribosomal subunit biogenesis GTPase RsgA.